We begin with the raw amino-acid sequence, 926 residues long: MRFRLNDSFSGKSWTIDNVQWTPQNLVAWIMELNIGLSDEAKLLLPNGMSLNETVLNSESDVVIYVLDQNLLTFTYDGDKIPSIPSLKGQPISNVLTGIIADSSSDQWKDKISKCLSLLSDILESSSKIHNQLSVCHDEYSTSIVSPEVAMNYLQRRQSGMKDLLFVFYERLDRVSVSDLLHDFLALPTGSLPITPLKILSTNWTKLDSWLNSISARYAEAQKRVQQCIGAANSIIVSPFKEVPSIKEGDDAYYHLRSVAQDAANILQEILKIESTSTTSQIKPKCNYETEITDCMEKLQSNLSELKSSRKSSLISLKSFWLSFYKVSLRYDALYEYLRQIAEELDRSKFVLSQSRNIFSLYIDILMEALRRTEWQESYNVSHDSSLPLDQEKELSLRKSWLSHFSNLLFNHGQLKYLPVLTRDEISNYLLNIQAHPNYQTFHQMLSNRLSEYLGFPGSPREAVSNTVQANNSLHEKLAMYQNRCNNLEAMLSHQNGFNYNINNDGLSPNAPHPPINEQSNSSQPFYRVSPSIVPLNVIRKLTNRKTSFTDSHILRLQDEVNQLRNELDLVNKRNEDLLIELQGKEEKIQYLETENEEVLQKYENLQEELSSTRKLLTKNEAAVAEQQSNEEMHSNEPNILNLYSVFEGKVDSLQELYNAFKLQLTSLKQKGEYATLAKDAEAVQHIIEERDYALAEKADLLKLSENRKEQCKILTQKLYTIVFRCNELQSVLRECVTQPGFDSDNERDGHASIPDRQIEFNSKDLQYLYWMDGEDADRNFQEFLNRMSSLDFDSFHNFVVSVLTQAHNHELRWKREFQSNRDKALKAILDSQSKVSLRNFKQGSLVLFLPTRRTAGNKKVWAAFNVNAPHYYLNTQPHLKLESRDWMLGRVTSIEDRTADDSTDKWLRLPSGTIWHLVEAIDERF.

2 coiled-coil regions span residues 461-496 (REAV…SHQN) and 548-671 (SFTD…LKQK). A Phosphoserine modification is found at S548. A Phosphothreonine modification is found at T550. The residue at position 552 (S552) is a Phosphoserine.

Belongs to the ATG11 family. In terms of assembly, homodimer and potential homooligomers. Interacts with taz1.

It localises to the preautophagosomal structure membrane. Its subcellular location is the vacuole membrane. Its function is as follows. Involved in cytoplasm to vacuole transport (Cvt), pexophagy, mitophagy and nucleophagy. Recruits mitochondria for their selective degradation via autophagy (mitophagy) during starvation. Works as scaffold proteins that recruit ATG proteins to the preautophagosome (PAS), the site of vesicle/autophagosome formation. Required for atg9 anterograde transport from the mitochondria to the PAS. Required for nitrogen starvation-induced sexual development and for entering the dormant G0 state. This Schizosaccharomyces pombe (strain 972 / ATCC 24843) (Fission yeast) protein is Taz1-interacting factor 1 (taf1).